Consider the following 362-residue polypeptide: Cytochrome P450 monooxygenase-like protein avaN (362 aa).

Residues 3–23 (VILAIFIAAAGCLFSSWRIYW) traverse the membrane as a helical segment.

It belongs to the cytochrome P450 family.

Its subcellular location is the membrane. It participates in secondary metabolite biosynthesis. Cytochrome P450 monooxygenase-like protein; part of the cluster that mediates the biosynthesis of a highly modified cyclo-arginine-tryptophan dipeptide (cRW). The first step of the pathway is perfornmed by the arginine-containing cyclodipeptide synthase (RCPDS) avaA that acts as the scaffold-generating enzyme and is responsible for formation of the cyclo-Arg-Trp (cRW) diketopiperazine. AvaB then acts as a multifunctional flavoenzyme that is responsible for generating the cyclo-Arg-formylkynurenine DKP, which can be deformylated by avaC. AvaB then further catalyzes an additional N-oxidation followed by cyclization and dehydration. The next step is an N-acetylation of the guanidine group catalyzed by the arginine N-acetyltransferase avaD. The roles of the additional enzymes identified within the ava cluster still have to be determined. This is Cytochrome P450 monooxygenase-like protein avaN from Aspergillus versicolor.